A 44-amino-acid polypeptide reads, in one-letter code: Antibacterial protein 3 homolog (44 aa).

This sequence belongs to the staphylococcal hemolytic protein family.

The protein resides in the secreted. Has hemolytic activity and also inhibits the growth of gonococci. This chain is Antibacterial protein 3 homolog, found in Staphylococcus haemolyticus (strain JCSC1435).